We begin with the raw amino-acid sequence, 1034 residues long: Potassium-transporting ATPase alpha chain 1 (1034 aa).

The Cytoplasmic segment spans residues 1–97 (MGKAENYEMY…NALRPPRGTP (97 aa)). A phosphotyrosine mark is found at Y7 and Y10. A disordered region spans residues 14-41 (LGPGPGGDMAAKMSKKKAGKGGGKKKEK). A compositionally biased stretch (basic residues) spans 26–39 (MSKKKAGKGGGKKK). Phosphoserine is present on S27. A helical membrane pass occupies residues 98–118 (EYVKFARQLAGGLQCLMWVAA). The Lumenal portion of the chain corresponds to 119–141 (AICLIAFAIQASEGDLTTDDNLY). A helical membrane pass occupies residues 142–162 (LALALIAVVVVTGCFGYYQEF). Residues 163–298 (KSTNIIASFK…NEKTPIAIEI (136 aa)) are Cytoplasmic-facing. Polar residues predominate over residues 225–239 (NSSLTGESEPQTRSP). The interval 225-245 (NSSLTGESEPQTRSPECTHES) is disordered. A helical membrane pass occupies residues 299–318 (EHFVDIIAGLAILFGATFFV). Residues 319–330 (VAMCIGYTFLRA) are Lumenal-facing. A helical transmembrane segment spans residues 331–348 (MVFFMAIVVAYVPEGLLA). The K(+) site is built by V339, A340, V342, and E344. Residues 349 to 782 (TVTVCLSLTA…EQGRLIFDNL (434 aa)) are Cytoplasmic-facing. The active-site 4-aspartylphosphate intermediate is the D386. Mg(2+) contacts are provided by D386 and T388. S462 and S600 each carry phosphoserine. Positions 727 and 731 each coordinate Mg(2+). Residues 783 to 802 (KKSIAYTLTKNIPELTPYLI) traverse the membrane as a helical segment. E796 is a binding site for K(+). Topologically, residues 803-812 (YITVSVPLPL) are lumenal. Residues 813-833 (GCITILFIELCTDIFPSVSLA) form a helical membrane-spanning segment. Residue E821 participates in K(+) binding. Residues 834 to 853 (YEKAESDIMHLRPRNPKRDR) are Cytoplasmic-facing. At S839 the chain carries Phosphoserine. The chain crosses the membrane as a helical span at residues 854–876 (LVNEPLAAYSYFQIGAIQSFAGF). At 877-928 (TDYFTAMAQEGWFPLLCVGLRPYWENHHLQDLQDSYGQEWTFGQRLYQQYTC) the chain is on the lumenal side. The helical transmembrane segment at 929 to 948 (YTVFFISIEMCQIADVLIRK) threads the bilayer. Over 949–962 (TRRLSAFQQGFFRN) the chain is Cytoplasmic. S953 bears the Phosphoserine; by PKA mark. A helical transmembrane segment spans residues 963–981 (RILVIAIVFQVCIGCFLCY). Residues 982 to 996 (CPGMPNIFNFMPIRY) lie on the Lumenal side of the membrane. A helical membrane pass occupies residues 997-1017 (QWWLVPMPFGLLIFVYDEIRK). Topologically, residues 1018–1034 (LGVRCCPGSWWDQELYY) are cytoplasmic.

It belongs to the cation transport ATPase (P-type) (TC 3.A.3) family. Type IIC subfamily. As to quaternary structure, the gastric H(+)/K(+) ATPase pump is composed of the catalytic alpha subunit ATP4A and the regulatory beta subunit ATP4B. Interacts (via the P-domain) with ATP4B (via N-terminus); this interaction stabilizes the lumenal-open E2 conformation state and prevents the reverse reaction of the transport cycle.

The protein resides in the apical cell membrane. It catalyses the reaction K(+)(out) + ATP + H2O + H(+)(in) = K(+)(in) + ADP + phosphate + 2 H(+)(out). Functionally, the catalytic subunit of the gastric H(+)/K(+) ATPase pump which transports H(+) ions in exchange for K(+) ions across the apical membrane of parietal cells. Uses ATP as an energy source to pump H(+) ions to the gastric lumen while transporting K(+) ion from the lumen into the cell. Remarkably generates a million-fold proton gradient across the gastric parietal cell membrane, acidifying the gastric juice down to pH 1. Within a transport cycle, the transfer of a H(+) ion across the membrane is coupled to ATP hydrolysis and is associated with a transient phosphorylation that shifts the pump conformation from inward-facing (E1) to outward-facing state (E2). The release of the H(+) ion in the stomach lumen is followed by binding of K(+) ion converting the pump conformation back to the E1 state. The sequence is that of Potassium-transporting ATPase alpha chain 1 (ATP4A) from Canis lupus familiaris (Dog).